We begin with the raw amino-acid sequence, 312 residues long: Small ribosomal subunit protein uS2m (312 aa).

The protein belongs to the universal ribosomal protein uS2 family.

It localises to the mitochondrion. This Acanthamoeba castellanii (Amoeba) protein is Small ribosomal subunit protein uS2m (RPS2).